The following is a 566-amino-acid chain: Protein RocB (566 aa).

In terms of biological role, involved in arginine degradative pathway. The polypeptide is Protein RocB (rocB) (Bacillus subtilis (strain 168)).